Here is a 244-residue protein sequence, read N- to C-terminus: MSKLDLNALNELPKVDRILALAETNAQLEKLDAEGRVAWALDNLPGEYVLSSSFGIQAAVSLHLVNQIRPDIPVILTDTGYLFPETYRFIDELTDKLKLNLKVYRATESAAWQEARYGKLWEQGVEGIEKYNDINKVEPMNRALKELNAQTWFAGLRREQSGSRANLPVLAIQRGVFKVLPIIDWDNRTIYQYLQKHGLKYHPLWDEGYLSVGDTHTTRKWEPGMAEEETRFFGLKRECGLHEG.

The active-site Nucleophile; cysteine thiosulfonate intermediate is the Cys-239.

The protein belongs to the PAPS reductase family. CysH subfamily.

Its subcellular location is the cytoplasm. The enzyme catalyses [thioredoxin]-disulfide + sulfite + adenosine 3',5'-bisphosphate + 2 H(+) = [thioredoxin]-dithiol + 3'-phosphoadenylyl sulfate. It functions in the pathway sulfur metabolism; hydrogen sulfide biosynthesis; sulfite from sulfate: step 3/3. Functionally, catalyzes the formation of sulfite from phosphoadenosine 5'-phosphosulfate (PAPS) using thioredoxin as an electron donor. The protein is Phosphoadenosine 5'-phosphosulfate reductase of Escherichia coli O6:K15:H31 (strain 536 / UPEC).